A 95-amino-acid chain; its full sequence is uncharacterized protein (95 aa).

This is an uncharacterized protein from Dictyostelium discoideum (Social amoeba).